We begin with the raw amino-acid sequence, 359 residues long: Phosphatidylglycerol--prolipoprotein diacylglyceryl transferase (359 aa).

4 consecutive transmembrane segments (helical) span residues valine 24–glycine 44, valine 58–valine 78, valine 98–isoleucine 118, and glycine 124–isoleucine 144. Arginine 146 provides a ligand contact to a 1,2-diacyl-sn-glycero-3-phospho-(1'-sn-glycerol). The next 3 helical transmembrane spans lie at phenylalanine 193 to leucine 213, isoleucine 222 to glutamate 243, and valine 258 to threonine 278. Positions proline 284–aspartate 359 are disordered. Positions isoleucine 306–glycine 323 are enriched in basic and acidic residues. The span at alanine 336–threonine 349 shows a compositional bias: low complexity. Over residues isoleucine 350–aspartate 359 the composition is skewed to basic and acidic residues.

It belongs to the Lgt family.

The protein resides in the cell membrane. The enzyme catalyses L-cysteinyl-[prolipoprotein] + a 1,2-diacyl-sn-glycero-3-phospho-(1'-sn-glycerol) = an S-1,2-diacyl-sn-glyceryl-L-cysteinyl-[prolipoprotein] + sn-glycerol 1-phosphate + H(+). Its pathway is protein modification; lipoprotein biosynthesis (diacylglyceryl transfer). Its function is as follows. Catalyzes the transfer of the diacylglyceryl group from phosphatidylglycerol to the sulfhydryl group of the N-terminal cysteine of a prolipoprotein, the first step in the formation of mature lipoproteins. The sequence is that of Phosphatidylglycerol--prolipoprotein diacylglyceryl transferase from Rhodococcus jostii (strain RHA1).